Reading from the N-terminus, the 198-residue chain is Thymidine kinase (198 aa).

Residues G9–S16 and D85–Q88 contribute to the ATP site. The active-site Proton acceptor is E86. Positions 143, 146, 180, and 183 each coordinate Zn(2+).

The protein belongs to the thymidine kinase family. As to quaternary structure, homotetramer.

It is found in the cytoplasm. It catalyses the reaction thymidine + ATP = dTMP + ADP + H(+). The sequence is that of Thymidine kinase from Streptococcus thermophilus (strain ATCC BAA-250 / LMG 18311).